Here is a 161-residue protein sequence, read N- to C-terminus: Nucleotide-binding protein BceJ2315_27070 (161 aa).

This sequence belongs to the YajQ family.

Nucleotide-binding protein. The chain is Nucleotide-binding protein BceJ2315_27070 from Burkholderia cenocepacia (strain ATCC BAA-245 / DSM 16553 / LMG 16656 / NCTC 13227 / J2315 / CF5610) (Burkholderia cepacia (strain J2315)).